We begin with the raw amino-acid sequence, 593 residues long: Calnexin (593 aa).

Positions 1–20 (MEGKWLLCMLLVLGTTIVQA) are cleaved as a signal peptide. Over 21–482 (HEGHDDDMID…QMIEAAEERP (462 aa)) the chain is Lumenal. Ca(2+)-binding residues include Ser-75 and Asp-118. Lys-138 bears the N6-acetyllysine mark. The cysteines at positions 161 and 195 are disulfide-linked. An alpha-D-glucoside-binding residues include Tyr-165, Lys-167, Tyr-186, and Asp-193. Residues 261 to 346 (GNLLNDMTPP…AEKPEDWDED (86 aa)) are disordered. Residues 277–410 (IEDPEDQKPE…RKIPNPDFFE (134 aa)) form a p domain (Extended arm) region. Repeat copies occupy residues 279–290 (DPEDQKPEDWDE), 296–307 (DPDAVKPDDWNE), 315–326 (DEEATKPDGWLD), 334–345 (DPDAEKPEDWDE), and 349–359 (GEWEAPQIANP). 4 X approximate repeats stretches follow at residues 279–345 (DPED…DWDE) and 349–406 (GEWE…IPNP). Positions 282–320 (DQKPEDWDERPKIPDPDAVKPDDWNEDAPAKIPDEEATK) are enriched in basic and acidic residues. The span at 324–346 (WLDDEPEYVPDPDAEKPEDWDED) shows a compositional bias: acidic residues. The interaction with PPIB stretch occupies residues 327–360 (DEPEYVPDPDAEKPEDWDEDMDGEWEAPQIANPK). Cys-361 and Cys-367 are disulfide-bonded. Tandem repeats lie at residues 368 to 378 (GVWQRPMIDNP), 382 to 392 (GKWKPPMIDNP), and 396 to 406 (GIWKPRKIPNP). Residue Glu-426 coordinates an alpha-D-glucoside. Asp-437 serves as a coordination point for Ca(2+). A helical transmembrane segment spans residues 483–503 (WLWVVYVLTVALPVFLVILFC). S-palmitoyl cysteine attachment occurs at residues Cys-503 and Cys-504. At 504-593 (CSGKKQSSPV…SPRNRKPRRE (90 aa)) the chain is on the cytoplasmic side. Residues 504–593 (CSGKKQSSPV…SPRNRKPRRE (90 aa)) form a sufficient to mediate interaction with SGIP1 region. The segment at 511-593 (SPVEYKKTDA…SPRNRKPRRE (83 aa)) is disordered. Residues 526–548 (KEEEEEKEEEKDKGDEEEEGEEK) show a composition bias toward acidic residues. Ser-555 is subject to Phosphoserine. The residue at position 563 (Thr-563) is a Phosphothreonine. Position 565 is a phosphoserine; by MAPK3 (Ser-565). Residue Ser-584 is modified to Phosphoserine.

This sequence belongs to the calreticulin family. As to quaternary structure, interacts with MAPK3/ERK1. Interacts with KCNH2. Associates with ribosomes. Interacts with SGIP1; involved in negative regulation of endocytosis. The palmitoylated form interacts with the ribosome-translocon complex component SSR1, promoting efficient folding of glycoproteins. Interacts with SERPINA2P/SERPINA2 and with the S and Z variants of SERPINA1. Interacts with PPIB. Interacts with ZNRF4. Interacts with SMIM22. Interacts with TMX2. Interacts with TMEM35A/NACHO and CHRNA7. Interacts with reticulophagy regulators RETREG2 and RETREG3. Interacts with DNM1L; may form part of a larger protein complex at the ER-mitochondrial interface during mitochondrial fission. Interacts with ADAM7. Post-translationally, phosphorylated at Ser-565 by MAPK3/ERK1. Phosphorylation by MAPK3/ERK1 increases its association with ribosomes. In terms of processing, palmitoylation by DHHC6 leads to the preferential localization to the perinuclear rough ER. It mediates the association of calnexin with the ribosome-translocon complex (RTC) which is required for efficient folding of glycosylated proteins. Ubiquitinated, leading to proteasomal degradation. Probably ubiquitinated by ZNRF4.

The protein localises to the endoplasmic reticulum membrane. Its subcellular location is the mitochondrion membrane. The protein resides in the melanosome membrane. In terms of biological role, calcium-binding protein that interacts with newly synthesized monoglucosylated glycoproteins in the endoplasmic reticulum. It may act in assisting protein assembly and/or in the retention within the ER of unassembled protein subunits. It seems to play a major role in the quality control apparatus of the ER by the retention of incorrectly folded proteins. Associated with partial T-cell antigen receptor complexes that escape the ER of immature thymocytes, it may function as a signaling complex regulating thymocyte maturation. Additionally it may play a role in receptor-mediated endocytosis at the synapse. The chain is Calnexin (CANX) from Canis lupus familiaris (Dog).